A 293-amino-acid chain; its full sequence is Glutamyl-Q tRNA(Asp) synthetase (293 aa).

L-glutamate contacts are provided by residues 8 to 12 (RFAPS) and Glu-44. A 'HIGH' region motif is present at residues 11–21 (PSPSGPLHAGS). 4 residues coordinate Zn(2+): Cys-98, Cys-100, Tyr-120, and Cys-124. L-glutamate contacts are provided by Tyr-183 and Arg-201. Residues 239 to 243 (KLSKQ) carry the 'KMSKS' region motif. Residue Lys-242 participates in ATP binding.

This sequence belongs to the class-I aminoacyl-tRNA synthetase family. GluQ subfamily. It depends on Zn(2+) as a cofactor.

Functionally, catalyzes the tRNA-independent activation of glutamate in presence of ATP and the subsequent transfer of glutamate onto a tRNA(Asp). Glutamate is transferred on the 2-amino-5-(4,5-dihydroxy-2-cyclopenten-1-yl) moiety of the queuosine in the wobble position of the QUC anticodon. The polypeptide is Glutamyl-Q tRNA(Asp) synthetase (Janthinobacterium sp. (strain Marseille) (Minibacterium massiliensis)).